Reading from the N-terminus, the 328-residue chain is Purple acid phosphatase 7 (328 aa).

The first 24 residues, 1–24 (MKMHVCFSVILMFLSIFFINGALS), serve as a signal peptide directing secretion. Residue Asp-48 coordinates Fe cation. The N-linked (GlcNAc...) asparagine glycan is linked to Asn-56. Residues Asp-81 and Tyr-84 each contribute to the Fe cation site. Asp-81 is a Zn(2+) binding site. Residues Asn-119 and His-213 each contribute to the Zn(2+) site. The active-site Proton donor is the His-222. A Zn(2+)-binding site is contributed by His-248. Residue 248–250 (HDH) coordinates substrate. Residue His-250 participates in Fe cation binding.

This sequence belongs to the metallophosphoesterase superfamily. Purple acid phosphatase family. In terms of assembly, homodimer. Fe cation is required as a cofactor. Requires Zn(2+) as cofactor. Expressed in roots, stems, leaves, flowers and siliques.

Its subcellular location is the secreted. The enzyme catalyses a phosphate monoester + H2O = an alcohol + phosphate. This chain is Purple acid phosphatase 7 (PAP7), found in Arabidopsis thaliana (Mouse-ear cress).